The chain runs to 241 residues: Agamous-like MADS-box protein AGL9 homolog (241 aa).

The 55-residue stretch at 3–57 (RGRVELKRIENKINRQVTFAKRRNGLLKKAYELSVLCDAEVALIIFSNRGKLYEF) folds into the MADS-box domain. The K-box domain occupies 89–179 (EISSQQEYLK…KQRLMEGSTL (91 aa)).

It is found in the nucleus. Functionally, probable transcription factor. The protein is Agamous-like MADS-box protein AGL9 homolog (FBP2) of Petunia hybrida (Petunia).